The chain runs to 189 residues: Interferon alpha-H (189 aa).

An N-terminal signal peptide occupies residues 1–23 (MAPAWSFLLALLLLSCNAICSLG). 2 cysteine pairs are disulfide-bonded: Cys24–Cys122 and Cys52–Cys162.

This sequence belongs to the alpha/beta interferon family.

The protein localises to the secreted. Produced by macrophages, IFN-alpha have antiviral activities. Interferon stimulates the production of two enzymes: a protein kinase and an oligoadenylate synthetase. This is Interferon alpha-H (IFNAH) from Bos taurus (Bovine).